Here is a 387-residue protein sequence, read N- to C-terminus: MKIIADENMPYVQELFGDLGIIETVNGRSLTAEMVKDADVLLVRSVTQVDASLLSKNSQLTFVGSATIGTDHIDTEYLTQRQISFSNAPGCNATAVGEFAFIAMLELANRFGTSLKDKVVGIVGAGNTGSAVARCLQAYGVEVLLHDPLIEKSDPRNFVSLDELITRANVISLHVPITKSGEHKTWYLFDESRLNSLNADTWLLNCCRGEVVDNRALINVKQQRADIKVVLDVWEGEPNPMRELIPYVEFATPHIAGYSLEGKARGTYMLYQKLMQVLGKKEEKEMLALLPSFWTEQLTLTKEPSEKALLQLSRFVYDLRDDDALFRATLLEDPSKKAPVNSSNNNGFDLMRKNHKHRREFSALTLATTGQSEVDWLLNLGYSGVGR.

Substrate is bound by residues Ser45 and Thr67. Asp147 is a binding site for NAD(+). Residue Arg208 is part of the active site. Asp232 is an NAD(+) binding site. Glu237 is a catalytic residue. His254 acts as the Proton donor in catalysis. Gly257 lines the NAD(+) pocket. Tyr258 contributes to the substrate binding site.

Belongs to the D-isomer specific 2-hydroxyacid dehydrogenase family. PdxB subfamily. In terms of assembly, homodimer.

The protein resides in the cytoplasm. It catalyses the reaction 4-phospho-D-erythronate + NAD(+) = (R)-3-hydroxy-2-oxo-4-phosphooxybutanoate + NADH + H(+). It functions in the pathway cofactor biosynthesis; pyridoxine 5'-phosphate biosynthesis; pyridoxine 5'-phosphate from D-erythrose 4-phosphate: step 2/5. Catalyzes the oxidation of erythronate-4-phosphate to 3-hydroxy-2-oxo-4-phosphonooxybutanoate. The sequence is that of Erythronate-4-phosphate dehydrogenase from Shewanella woodyi (strain ATCC 51908 / MS32).